A 565-amino-acid polypeptide reads, in one-letter code: Proline--tRNA ligase (565 aa).

This sequence belongs to the class-II aminoacyl-tRNA synthetase family. ProS type 1 subfamily. As to quaternary structure, homodimer.

The protein resides in the cytoplasm. It carries out the reaction tRNA(Pro) + L-proline + ATP = L-prolyl-tRNA(Pro) + AMP + diphosphate. Catalyzes the attachment of proline to tRNA(Pro) in a two-step reaction: proline is first activated by ATP to form Pro-AMP and then transferred to the acceptor end of tRNA(Pro). As ProRS can inadvertently accommodate and process non-cognate amino acids such as alanine and cysteine, to avoid such errors it has two additional distinct editing activities against alanine. One activity is designated as 'pretransfer' editing and involves the tRNA(Pro)-independent hydrolysis of activated Ala-AMP. The other activity is designated 'posttransfer' editing and involves deacylation of mischarged Ala-tRNA(Pro). The misacylated Cys-tRNA(Pro) is not edited by ProRS. The chain is Proline--tRNA ligase from Hydrogenobaculum sp. (strain Y04AAS1).